The chain runs to 129 residues: Protein yippee-like At5g53940 (129 aa).

A Yippee domain is found at 12 to 109 (RSYRCRFCRT…LERGRIVDEI (98 aa)). Zn(2+) is bound by residues C16, C19, C72, and C75.

It belongs to the yippee family.

This is Protein yippee-like At5g53940 from Arabidopsis thaliana (Mouse-ear cress).